The chain runs to 66 residues: Ocellatin-PT4 (66 aa).

The N-terminal stretch at 1-22 (MAFLKKSLFLVLFLGLVSLSIC) is a signal peptide. Residues 23–39 (DEEKRQDEDDDDDDDEE) constitute a propeptide that is removed on maturation. Valine 66 bears the Valine amide mark.

As to expression, expressed by the skin glands.

The protein resides in the secreted. In terms of biological role, has antibacterial activity against Gram-negative bacteria E.coli ATCC 25922 (MIC=80 uM), K.pneumoniae ATCC 700603 (MIC=310 uM) and S.choleraesuis ATCC 14028 (MIC=310 uM). Shows no hemolytic activity and no cytotoxicity. This chain is Ocellatin-PT4, found in Leptodactylus pustulatus (Ceara white-lipped frog).